A 229-amino-acid polypeptide reads, in one-letter code: Ras-like protein rasV (229 aa).

Residue 40–47 coordinates GTP; sequence GDGGVGKT. Residues 62–70 carry the Effector region motif; it reads YDPTIEDSY. GTP is bound by residues 87-91 and 146-149; these read DTAGQ and NKSD. C226 carries the cysteine methyl ester modification. C226 is lipidated: S-geranylgeranyl cysteine. Residues 227-229 constitute a propeptide, removed in mature form; it reads KVM.

This sequence belongs to the small GTPase superfamily. Ras family.

It is found in the cell membrane. The enzyme catalyses GTP + H2O = GDP + phosphate + H(+). Ras proteins bind GDP/GTP and possess intrinsic GTPase activity. This is Ras-like protein rasV (rasV) from Dictyostelium discoideum (Social amoeba).